A 1556-amino-acid polypeptide reads, in one-letter code: Ubiquitin carboxyl-terminal hydrolase 47 (1556 aa).

The disordered stretch occupies residues 117 to 231 (MKSDGEKAKS…AKKTAKVTSK (115 aa)). A compositionally biased stretch (low complexity) spans 146–156 (ASGSSSPSKAK). Phosphoserine is present on residues S172 and S173. Residues 180–189 (IKTTAAKISK) are compositionally biased toward low complexity. Over residues 191 to 200 (GSEKAPRASP) the composition is skewed to basic and acidic residues. A compositionally biased stretch (polar residues) spans 208 to 219 (TEINSKNTSSES). A Phosphoserine modification is found at S238. A USP domain is found at 396–779 (VGLVNQAMTC…NAYMLMYRQV (384 aa)). The active-site Nucleophile is the C405. Polar residues-rich tracts occupy residues 628–642 (NRSG…QLNG) and 661–673 (LSSG…SSSQ). Positions 628-697 (NRSGNSGEQN…SSSTSKSAKQ (70 aa)) are disordered. The segment covering 688–697 (SSSTSKSAKQ) has biased composition (low complexity). The Proton acceptor role is filled by H720. Positions 1087 to 1148 (EPMSQPSPSH…LSSPEDEAAS (62 aa)) are disordered. Basic and acidic residues predominate over residues 1109–1125 (DGDRTLVETDNMAHRGG). Residues 1128–1141 (SQVSSTSHSPQLSS) are compositionally biased toward low complexity. Residues S1131, S1132, S1140, S1141, S1199, S1201, and S1205 each carry the phosphoserine modification.

It belongs to the peptidase C19 family. In terms of assembly, interacts with ttk.

The protein localises to the nucleus. It catalyses the reaction Thiol-dependent hydrolysis of ester, thioester, amide, peptide and isopeptide bonds formed by the C-terminal Gly of ubiquitin (a 76-residue protein attached to proteins as an intracellular targeting signal).. Functionally, ubiquitin-specific protease that deubiquitinates target proteins to regulate different cellular and developmental pathways. Functions downstream of Dsor1/MEK to positively regulate the Ras/MAPK signaling pathway. Likely to modulate the pathway during various cellular and developmental processes including rl/MAPK activation by the receptors InR, Egfr and sevenless/sev. Functions in the post-translational stabilization of rl/MAPK levels in a mechanism that is independent of rl activity and opposes the activity of the E2 enzyme Unc6 and the putative E3 ligases poe, Ufd4 and Kcmf1, which mediate the ubiquitination and proteasomal degradation of rl. During eye development it may also act downstream of rl/MAPK to negatively regulate the Ras/MAPK signaling pathway by stabilizing the transcriptional repressor ttk and consequently inhibiting photoreceptor cell development. This suggests that at least during eye development, it may act in both the positive and negative regulation of the Ras/MAPK signaling pathway to mediate the development of different cell types. Positively regulates border follicle cell migration during oogenesis by mediating the deubiquitination and stabilization of slbo. In the wing disks it positively regulates wg signaling by stabilizing arm. Has an effect on position-effect variegation. The polypeptide is Ubiquitin carboxyl-terminal hydrolase 47 (Drosophila melanogaster (Fruit fly)).